A 67-amino-acid polypeptide reads, in one-letter code: Small ribosomal subunit protein eS27 (67 aa).

Residues C22, C25, C41, and C44 each contribute to the Zn(2+) site. The segment at 22-44 adopts a C4-type zinc-finger fold; the sequence is CPDCGNEQITFSHAAMVVRCLVC.

The protein belongs to the eukaryotic ribosomal protein eS27 family. As to quaternary structure, part of the 30S ribosomal subunit. Zn(2+) serves as cofactor.

The sequence is that of Small ribosomal subunit protein eS27 from Pyrobaculum aerophilum (strain ATCC 51768 / DSM 7523 / JCM 9630 / CIP 104966 / NBRC 100827 / IM2).